Here is a 215-residue protein sequence, read N- to C-terminus: Putative ribosome biogenesis protein slx9-like (215 aa).

3 disordered regions span residues 49–121 (IIPS…GLGM), 133–157 (DSMK…MSLK), and 189–215 (LQNQ…LKRK).

This sequence belongs to the SLX9 family.

The protein localises to the nucleus. Its subcellular location is the nucleolus. Functionally, involved in ribosome biogenesis. This chain is Putative ribosome biogenesis protein slx9-like, found in Dictyostelium discoideum (Social amoeba).